Reading from the N-terminus, the 228-residue chain is Protein-L-isoaspartate O-methyltransferase (228 aa).

Ser-74 is a catalytic residue.

The protein belongs to the methyltransferase superfamily. L-isoaspartyl/D-aspartyl protein methyltransferase family.

The protein resides in the cytoplasm. The catalysed reaction is [protein]-L-isoaspartate + S-adenosyl-L-methionine = [protein]-L-isoaspartate alpha-methyl ester + S-adenosyl-L-homocysteine. In terms of biological role, catalyzes the methyl esterification of L-isoaspartyl residues in peptides and proteins that result from spontaneous decomposition of normal L-aspartyl and L-asparaginyl residues. It plays a role in the repair and/or degradation of damaged proteins. The sequence is that of Protein-L-isoaspartate O-methyltransferase from Methylorubrum extorquens (strain PA1) (Methylobacterium extorquens).